The following is a 270-amino-acid chain: MEFYGLIGEKLSHSLSPKIHNTLFKDLKIEGAYKLFEVEKENLGKLIESIKLLKIKGVNVTIPYKQDVMEYLDFISDEAKKIGAVNTIYLEDNKLYGYNTDYYGFGTILNNNEIVIRDNVAMVLGNGGAAKAVITYLLDHGIKKIYLVSRKIKGNSADKDERIEFKTYEEISEIKGDILINTTPLGMYPKVDDTPVNEDIINNFNSLIDIIYNPRETRFLKIGKNSNKKVCGGIEMLVGQAIKAEEIWQECQLDNKLTQGLYSIFENEFK.

Shikimate-binding positions include 14 to 16 (SLS) and T61. K65 serves as the catalytic Proton acceptor. NADP(+) is bound at residue D77. Shikimate is bound by residues N86 and D101. NADP(+) is bound by residues 125–129 (GNGGA) and I210. Y212 contributes to the shikimate binding site. Residue G233 participates in NADP(+) binding.

The protein belongs to the shikimate dehydrogenase family. In terms of assembly, homodimer.

The catalysed reaction is shikimate + NADP(+) = 3-dehydroshikimate + NADPH + H(+). It participates in metabolic intermediate biosynthesis; chorismate biosynthesis; chorismate from D-erythrose 4-phosphate and phosphoenolpyruvate: step 4/7. In terms of biological role, involved in the biosynthesis of the chorismate, which leads to the biosynthesis of aromatic amino acids. Catalyzes the reversible NADPH linked reduction of 3-dehydroshikimate (DHSA) to yield shikimate (SA). This Clostridium beijerinckii (strain ATCC 51743 / NCIMB 8052) (Clostridium acetobutylicum) protein is Shikimate dehydrogenase (NADP(+)).